The sequence spans 249 residues: 3-deoxy-manno-octulosonate cytidylyltransferase (249 aa).

This sequence belongs to the KdsB family.

It is found in the cytoplasm. It catalyses the reaction 3-deoxy-alpha-D-manno-oct-2-ulosonate + CTP = CMP-3-deoxy-beta-D-manno-octulosonate + diphosphate. The protein operates within nucleotide-sugar biosynthesis; CMP-3-deoxy-D-manno-octulosonate biosynthesis; CMP-3-deoxy-D-manno-octulosonate from 3-deoxy-D-manno-octulosonate and CTP: step 1/1. Its pathway is bacterial outer membrane biogenesis; lipopolysaccharide biosynthesis. Functionally, activates KDO (a required 8-carbon sugar) for incorporation into bacterial lipopolysaccharide in Gram-negative bacteria. The protein is 3-deoxy-manno-octulosonate cytidylyltransferase of Brucella anthropi (strain ATCC 49188 / DSM 6882 / CCUG 24695 / JCM 21032 / LMG 3331 / NBRC 15819 / NCTC 12168 / Alc 37) (Ochrobactrum anthropi).